The chain runs to 525 residues: GMP synthase [glutamine-hydrolyzing] (525 aa).

In terms of domain architecture, Glutamine amidotransferase type-1 spans 9-207 (RILILDFGSQ…ILDICECEAL (199 aa)). The Nucleophile role is filled by C86. Residues H181 and E183 contribute to the active site. A GMPS ATP-PPase domain is found at 208-400 (WTPSKIAEDA…LGLPYDMVYR (193 aa)). 235–241 (SGGVDSS) contacts ATP.

As to quaternary structure, homodimer.

The catalysed reaction is XMP + L-glutamine + ATP + H2O = GMP + L-glutamate + AMP + diphosphate + 2 H(+). It functions in the pathway purine metabolism; GMP biosynthesis; GMP from XMP (L-Gln route): step 1/1. Its function is as follows. Catalyzes the synthesis of GMP from XMP. The polypeptide is GMP synthase [glutamine-hydrolyzing] (Pseudomonas fluorescens (strain SBW25)).